A 501-amino-acid chain; its full sequence is Dynein regulatory complex subunit 5 (501 aa).

Positions M1–K23 are enriched in polar residues. 2 disordered regions span residues M1 to A56 and P203 to E222. Over residues S24–G34 the composition is skewed to low complexity. A compositionally biased stretch (polar residues) spans P35–S49. LRR repeat units follow at residues V308–D321, R335–A355, N363–A383, C391–S411, and T419–L439.

This sequence belongs to the DRC5 family. In terms of assembly, component of the nexin-dynein regulatory complex (N-DRC). Interacts with DRC1. Interacts with FBXL13/DRC6, DRC3 and DRC7.

It localises to the cell projection. Its subcellular location is the cilium. The protein resides in the flagellum. It is found in the cytoplasm. The protein localises to the cytoskeleton. It localises to the flagellum axoneme. Its function is as follows. Component of the nexin-dynein regulatory complex (N-DRC) a key regulator of ciliary/flagellar motility which maintains the alignment and integrity of the distal axoneme and regulates microtubule sliding in motile axonemes. May play a role in the assembly of N-DRC. May be required for sperm motility. The sequence is that of Dynein regulatory complex subunit 5 (TCTE1) from Macaca fascicularis (Crab-eating macaque).